We begin with the raw amino-acid sequence, 258 residues long: D-beta-hydroxybutyrate dehydrogenase (258 aa).

An NAD(+)-binding site is contributed by Leu8 to Ile32. Ser140 serves as a coordination point for substrate. The Proton acceptor role is filled by Tyr153.

This sequence belongs to the short-chain dehydrogenases/reductases (SDR) family.

The enzyme catalyses (R)-3-hydroxybutanoate + NAD(+) = acetoacetate + NADH + H(+). In Cupriavidus necator (strain ATCC 17699 / DSM 428 / KCTC 22496 / NCIMB 10442 / H16 / Stanier 337) (Ralstonia eutropha), this protein is D-beta-hydroxybutyrate dehydrogenase (hbdH1).